A 185-amino-acid chain; its full sequence is Ribosome-recycling factor (185 aa).

Belongs to the RRF family.

It localises to the cytoplasm. Its function is as follows. Responsible for the release of ribosomes from messenger RNA at the termination of protein biosynthesis. May increase the efficiency of translation by recycling ribosomes from one round of translation to another. In Shewanella sp. (strain MR-4), this protein is Ribosome-recycling factor.